Consider the following 540-residue polypeptide: Glucose-6-phosphate isomerase (540 aa).

Catalysis depends on Glu350, which acts as the Proton donor. Residues His381 and Lys503 contribute to the active site.

The protein belongs to the GPI family.

Its subcellular location is the cytoplasm. It carries out the reaction alpha-D-glucose 6-phosphate = beta-D-fructose 6-phosphate. It functions in the pathway carbohydrate biosynthesis; gluconeogenesis. It participates in carbohydrate degradation; glycolysis; D-glyceraldehyde 3-phosphate and glycerone phosphate from D-glucose: step 2/4. Its function is as follows. Catalyzes the reversible isomerization of glucose-6-phosphate to fructose-6-phosphate. This is Glucose-6-phosphate isomerase from Paraburkholderia xenovorans (strain LB400).